The chain runs to 468 residues: MAQVQGKIVQCIGAVVDVEFPRDQMPKVYDALKLEGSPLTLEVQQQLGDGVVRTIALGSSDGLKRGLMVTNTGNPITVPVGKATLGRIMDVLGNPIDERGPVDQSLTASIHRKAPAYDELSPSQELLETGIKVIDLVCPFAKGGKVGLFGGAGVGKTVNMMELINNIAKAHSGLSVFAGVGERTREGNDFYHEMADSGVVNLENLGESKVAMVYGQMNEPPGNRLRVALTGLTIAESFRDEGRDVLFFVDNIYRYTLAGTEVSALLGRMPSAVGYQPTLAEEMGRLQERITSTKVGSITSIQAVYVPADDLTDPSPATTFAHLDSTVVLSRDIAALGIYPAVDPLDSTSRQLDPQVVGEEHYQVARQVQGTLQRYKELRDIIAILGMDELAPEDKLVVARARKIQRFLSQPFHVAEVFTGSPGKYVPLSETIRGFKMIVAGECDHLPEQAFYMVGTIDEAFEKAKKVA.

ATP is bound at residue 150–157 (GGAGVGKT).

The protein belongs to the ATPase alpha/beta chains family. F-type ATPases have 2 components, CF(1) - the catalytic core - and CF(0) - the membrane proton channel. CF(1) has five subunits: alpha(3), beta(3), gamma(1), delta(1), epsilon(1). CF(0) has three main subunits: a(1), b(2) and c(9-12). The alpha and beta chains form an alternating ring which encloses part of the gamma chain. CF(1) is attached to CF(0) by a central stalk formed by the gamma and epsilon chains, while a peripheral stalk is formed by the delta and b chains.

The protein resides in the cell inner membrane. The enzyme catalyses ATP + H2O + 4 H(+)(in) = ADP + phosphate + 5 H(+)(out). Produces ATP from ADP in the presence of a proton gradient across the membrane. The catalytic sites are hosted primarily by the beta subunits. The protein is ATP synthase subunit beta of Acidovorax ebreus (strain TPSY) (Diaphorobacter sp. (strain TPSY)).